The sequence spans 68 residues: Protein SlyX homolog (68 aa).

Belongs to the SlyX family.

In Brucella abortus (strain S19), this protein is Protein SlyX homolog.